The primary structure comprises 562 residues: Ycf55-like protein (562 aa).

One can recognise a Response regulatory domain in the interval 7-125; sequence TIVIVDEDPV…DLVTGLKQVH (119 aa).

This sequence belongs to the ycf55 family.

In Synechocystis sp. (strain ATCC 27184 / PCC 6803 / Kazusa), this protein is Ycf55-like protein.